Consider the following 377-residue polypeptide: MDMEIDDPMHGSDEDQLSPTLDEDMNSDDGKNNTKARSNDEDTDEELEDFNFKPGSSGIADHKSSKPLKLTNTNINQLDQWIEHLSKCEPLSEDDVARLCKMAVDVLQFEENVKPINVPVTICGDVHGQFHDLLELFKIGGPCPDTNYLFMGDYVDRGYYSVETVSYLVAMKVRYPHRITILRGNHESRQITQVYGFYDECLRKYGSANVWKMFTDLFDYFPVTALVDNKIFCLHGGLSPMIETIDQVRDLNRIQEVPHEGPMCDLLWSDPDDRGGWGISPRGAGFTFGQDISEQFNHTNDLSLIARAHQLVMEGYSWSHQQNVVTIFSAPNYCYRCGNQAAIMEVDENHNRQFLQYDPSVRPGEPTVTRKTPDYFL.

The disordered stretch occupies residues 1–66 (MDMEIDDPMH…SGIADHKSSK (66 aa)). The segment covering 28–40 (DDGKNNTKARSND) has biased composition (basic and acidic residues). Ser38 carries the post-translational modification Phosphoserine. Phosphothreonine is present on Thr43. Mn(2+)-binding residues include Asp125, His127, Asp153, and Asn185. His186 serves as the catalytic Proton donor. Residues His235 and His309 each contribute to the Mn(2+) site. Residue Leu377 is modified to Leucine methyl ester.

Belongs to the PPP phosphatase family. PP-2A subfamily. As to quaternary structure, inactivated in a complex with phosphatase methylesterase PPE1 (PP2Ai). Interacts with phosphatase 2A activator RRD2, which can reactivate PP2Ai by dissociating the catalytic subunit from the complex. Interacts with TAP42. Mn(2+) is required as a cofactor. Reversibly methyl esterified on Leu-377 by leucine carboxyl methyltransferase 1 (PPM1) and protein phosphatase methylesterase 1 (PPE1). Carboxyl methylation influences the affinity of the catalytic subunit for the different regulatory subunits, thereby modulating the PP2A holoenzyme's substrate specificity, enzyme activity and cellular localization.

It catalyses the reaction O-phospho-L-seryl-[protein] + H2O = L-seryl-[protein] + phosphate. The catalysed reaction is O-phospho-L-threonyl-[protein] + H2O = L-threonyl-[protein] + phosphate. Exact function not known, phosphatase 2A performs an essential cellular function. The sequence is that of Serine/threonine-protein phosphatase PP2A-2 catalytic subunit (PPH22) from Saccharomyces cerevisiae (strain ATCC 204508 / S288c) (Baker's yeast).